The following is a 459-amino-acid chain: Alcohol acyl transferase 2 (459 aa).

Residues histidine 164 and asparagine 385 each act as proton acceptor in the active site.

It belongs to the plant acyltransferase family. Highly expressed in the cortex and skin of ripe fruit.

Its function is as follows. Involved in the biosynthesis of volatile esters which confer ripe apple fruit flavor. Alcohol acyl transferase that can use a wide range of alcohols as substrate to produce esters. The polypeptide is Alcohol acyl transferase 2 (Malus domestica (Apple)).